Consider the following 513-residue polypeptide: Flavonoid 3'-monooxygenase (513 aa).

Residues 1-21 form a helical membrane-spanning segment; sequence MATLFLTILLATVLFLILRIF. Over 22–513 the chain is Cytoplasmic; that stretch reads SHRRNRSHNN…APNVYGLGSG (492 aa). A heme-binding site is contributed by cysteine 445.

Belongs to the cytochrome P450 family. The cofactor is heme. In terms of tissue distribution, high expression in siliques and to a lower extent in stems, flowers and senescing leaves.

The protein localises to the endoplasmic reticulum membrane. It carries out the reaction a 3'-unsubstituted flavone + reduced [NADPH--hemoprotein reductase] + O2 = a 3'-hydroxyflavone + oxidized [NADPH--hemoprotein reductase] + H2O + H(+). The protein operates within secondary metabolite biosynthesis; flavonoid biosynthesis. Catalyzes the 3'-hydroxylation of the flavonoid B-ring to the 3',4'-hydroxylated state. Convert naringenin to eriodictyol and dihydrokaempferol to dihydroquercetin. This chain is Flavonoid 3'-monooxygenase (CYP75B1), found in Arabidopsis thaliana (Mouse-ear cress).